A 209-amino-acid chain; its full sequence is Chaperone protein TorD (209 aa).

It belongs to the TorD/DmsD family. TorD subfamily.

Its subcellular location is the cytoplasm. Functionally, involved in the biogenesis of TorA. Acts on TorA before the insertion of the molybdenum cofactor and, as a result, probably favors a conformation of the apoenzyme that is competent for acquiring the cofactor. In Shewanella sp. (strain ANA-3), this protein is Chaperone protein TorD.